Consider the following 346-residue polypeptide: NADH-ubiquinone oxidoreductase chain 2 (346 aa).

The next 10 helical transmembrane spans lie at 25-45 (HWILAWTGLEINTLAIIPLIS), 52-72 (AIEATIKYFLTQSTASALILF), 95-115 (CLMLTMAIAIKLGLVPFHFWF), 124-144 (LITALLLSTLMKLPPITLLLL), 149-169 (LNTTLLTLLAISSTLIGGWMG), 178-198 (ILAFSSISHLGWMIMIISYNP), 200-220 (LTILTFILYTIMTSTVFLSLA), 242-262 (ATVMLTLLSLAGLPPLTGFMP), 274-294 (EMTPMATIITMLSLLSLFFYL), and 326-346 (AILTALSTTLLPLSPLIITML).

This sequence belongs to the complex I subunit 2 family. Core subunit of respiratory chain NADH dehydrogenase (Complex I) which is composed of 45 different subunits.

The protein resides in the mitochondrion inner membrane. The enzyme catalyses a ubiquinone + NADH + 5 H(+)(in) = a ubiquinol + NAD(+) + 4 H(+)(out). In terms of biological role, core subunit of the mitochondrial membrane respiratory chain NADH dehydrogenase (Complex I) which catalyzes electron transfer from NADH through the respiratory chain, using ubiquinone as an electron acceptor. Essential for the catalytic activity and assembly of complex I. This is NADH-ubiquinone oxidoreductase chain 2 (MT-ND2) from Gallus gallus (Chicken).